The following is a 243-amino-acid chain: Carboxy-S-adenosyl-L-methionine synthase (243 aa).

Residues Tyr-40, Gly-65–Ser-67, Asp-90–Asn-91, Asp-118–Ile-119, Asn-133, and Arg-200 each bind S-adenosyl-L-methionine.

This sequence belongs to the class I-like SAM-binding methyltransferase superfamily. Cx-SAM synthase family. As to quaternary structure, homodimer.

The enzyme catalyses prephenate + S-adenosyl-L-methionine = carboxy-S-adenosyl-L-methionine + 3-phenylpyruvate + H2O. Catalyzes the conversion of S-adenosyl-L-methionine (SAM) to carboxy-S-adenosyl-L-methionine (Cx-SAM). This chain is Carboxy-S-adenosyl-L-methionine synthase, found in Shewanella oneidensis (strain ATCC 700550 / JCM 31522 / CIP 106686 / LMG 19005 / NCIMB 14063 / MR-1).